Consider the following 448-residue polypeptide: Cytoplasmic tRNA 2-thiolation protein 2 (448 aa).

Belongs to the CTU2/NCS2 family.

It localises to the cytoplasm. Its pathway is tRNA modification; 5-methoxycarbonylmethyl-2-thiouridine-tRNA biosynthesis. Functionally, plays a central role in 2-thiolation of mcm(5)S(2)U at tRNA wobble positions of tRNA(Lys), tRNA(Glu) and tRNA(Gln). May act by forming a heterodimer with NCS6 that ligates sulfur from thiocarboxylated URM1 onto the uridine of tRNAs at wobble position. Prior mcm(5) tRNA modification by the elongator complex is required for 2-thiolation. May also be involved in protein urmylation. This Lodderomyces elongisporus (strain ATCC 11503 / CBS 2605 / JCM 1781 / NBRC 1676 / NRRL YB-4239) (Yeast) protein is Cytoplasmic tRNA 2-thiolation protein 2.